A 170-amino-acid polypeptide reads, in one-letter code: Adenine phosphoribosyltransferase (170 aa).

The protein belongs to the purine/pyrimidine phosphoribosyltransferase family. Homodimer.

The protein localises to the cytoplasm. The enzyme catalyses AMP + diphosphate = 5-phospho-alpha-D-ribose 1-diphosphate + adenine. It functions in the pathway purine metabolism; AMP biosynthesis via salvage pathway; AMP from adenine: step 1/1. Its function is as follows. Catalyzes a salvage reaction resulting in the formation of AMP, that is energically less costly than de novo synthesis. This is Adenine phosphoribosyltransferase from Trichodesmium erythraeum (strain IMS101).